A 659-amino-acid chain; its full sequence is DNA ligase (659 aa).

NAD(+)-binding positions include 32–36, 81–82, and Glu-110; these read DAEYD and SL. Residue Lys-112 is the N6-AMP-lysine intermediate of the active site. Arg-133, Glu-168, Lys-284, and Lys-308 together coordinate NAD(+). Residues Cys-402, Cys-405, Cys-420, and Cys-425 each coordinate Zn(2+). The region spanning 582-659 is the BRCT domain; the sequence is AKPQIFAGKS…SEEEFAELLP (78 aa).

This sequence belongs to the NAD-dependent DNA ligase family. LigA subfamily. The cofactor is Mg(2+). Requires Mn(2+) as cofactor.

It carries out the reaction NAD(+) + (deoxyribonucleotide)n-3'-hydroxyl + 5'-phospho-(deoxyribonucleotide)m = (deoxyribonucleotide)n+m + AMP + beta-nicotinamide D-nucleotide.. DNA ligase that catalyzes the formation of phosphodiester linkages between 5'-phosphoryl and 3'-hydroxyl groups in double-stranded DNA using NAD as a coenzyme and as the energy source for the reaction. It is essential for DNA replication and repair of damaged DNA. In Desulfitobacterium hafniense (strain DSM 10664 / DCB-2), this protein is DNA ligase.